Here is a 369-residue protein sequence, read N- to C-terminus: Porin-like protein BUsg_347 (369 aa).

Positions 1 to 23 (MKNHKSLAILIPMLFAGSTAVNA) are cleaved as a signal peptide.

It belongs to the Gram-negative porin family. As to quaternary structure, homotrimer.

It is found in the cell outer membrane. In terms of biological role, forms pores that allow passive diffusion of small molecules across the membrane. This is Porin-like protein BUsg_347 from Buchnera aphidicola subsp. Schizaphis graminum (strain Sg).